The following is a 505-amino-acid chain: Cholesteryl ester transfer protein (505 aa).

Residues 1–24 (MLWAGGMRLGMARILLMLVHAAAA) form the signal peptide. N-linked (GlcNAc...) asparagine glycosylation is found at asparagine 68 and asparagine 114. A disulfide bridge connects residues cysteine 169 and cysteine 210. N-linked (GlcNAc...) asparagine glycosylation is found at asparagine 266, asparagine 344, and asparagine 422.

It belongs to the BPI/LBP/Plunc superfamily. BPI/LBP family. Highly expressed in liver brain, heart, and spleen. Secreted in plasma.

The protein localises to the secreted. It carries out the reaction cholesteryl (9Z-octadecenoate)(in) = cholesteryl (9Z-octadecenoate)(out). The catalysed reaction is 1,2,3-tri-(9Z-octadecenoyl)-glycerol(in) = 1,2,3-tri-(9Z-octadecenoyl)-glycerol(out). The enzyme catalyses cholesteryl (9Z,12Z)-octadecadienoate(in) = cholesteryl (9Z,12Z)-octadecadienoate(out). Its function is as follows. Involved in the transfer of neutral lipids, including cholesteryl ester and triglyceride, among lipoprotein particles. Allows the net movement of cholesteryl ester from high density lipoproteins/HDL to triglyceride-rich very low density lipoproteins/VLDL, and the equimolar transport of triglyceride from VLDL to HDL. Regulates the reverse cholesterol transport, by which excess cholesterol is removed from peripheral tissues and returned to the liver for elimination. This Gallus gallus (Chicken) protein is Cholesteryl ester transfer protein.